A 208-amino-acid chain; its full sequence is Fusaric acid resistance protein FusD (208 aa).

A helical membrane pass occupies residues 7–29; sequence LLLSMLVSAIAFAVLFPPTAPWL.

The protein resides in the cell membrane. Involved in the resistance (detoxification) of the fungal toxin fusaric acid. This Burkholderia cepacia (Pseudomonas cepacia) protein is Fusaric acid resistance protein FusD (fusD).